Reading from the N-terminus, the 381-residue chain is MHLLAILFCALWSAVLAENSDDYDLMYVNLDNEIDNGLHPTEDPTPCACGQEHSEWDKLFIMLENSQMRERMLLQATDDVLRGELQRLREELGRLAESLARPCAPGAPAEARLTSALDELLQATRDAGRRLARMEGAEAQRPEEAGRALAAVLEELRQTRADLHAVQGWAARSWLPAGCETAILFPMRSKKIFGSVHPVRPMRLESFSACIWVKATDVLNKTILFSYGTKRNPYEIQLYLSYQSIVFVVGGEENKLVAEAMVSLGRWTHLCGTWNSEEGLTSLWVNGELAATTVEMATGHIVPEGGILQIGQEKNGCCVGGGFDETLAFSGRLTGFNIWDSVLSNEEIRETGGAESCHIRGNIVGWGVTEIQPHGGAQYVS.

The signal sequence occupies residues 1–17; that stretch reads MHLLAILFCALWSAVLA. 2 coiled-coil regions span residues 74 to 101 and 143 to 167; these read LQATDDVLRGELQRLREELGRLAESLAR and EEAGRALAAVLEELRQTRADLHAVQ. 2 disulfides stabilise this stretch: Cys179–Cys357 and Cys210–Cys271. The region spanning 179–381 is the Pentraxin (PTX) domain; the sequence is CETAILFPMR…QPHGGAQYVS (203 aa). N-linked (GlcNAc...) asparagine glycosylation is present at Asn220.

Homooctamer; disulfide-linked. Binds to C1q. As to quaternary structure, (Microbial infection) Interacts with SARS coronavirus-2/SARS-CoV-2 Nucleoprotein and Spike protein homotrimer. In terms of processing, glycosylated.

The protein resides in the secreted. Functionally, plays a role in the regulation of innate resistance to pathogens, inflammatory reactions, possibly clearance of self-components and female fertility. The protein is Pentraxin-related protein PTX3 of Homo sapiens (Human).